The primary structure comprises 63 residues: Rubredoxin-2 (63 aa).

A Rubredoxin-like domain is found at 8–59 (YKLFRCLQCGFEYDEAIGWPDDGIEPGTRWDEIPEDWSCPDCGAAKVDFEMV). Residues cysteine 13, cysteine 16, cysteine 46, and cysteine 49 each contribute to the Fe cation site.

Belongs to the rubredoxin family. Fe(3+) is required as a cofactor.

In terms of biological role, involved in the hydrocarbon hydroxylating system, which transfers electrons from NADH to rubredoxin reductase and then through rubredoxin to alkane 1 monooxygenase. This chain is Rubredoxin-2 (rubA2), found in Rhodococcus erythropolis (Arthrobacter picolinophilus).